Reading from the N-terminus, the 305-residue chain is Olfactory receptor 4X1 (305 aa).

At 1 to 23 (MVATNNVTEIIFVGFSQNWSEQR) the chain is on the extracellular side. Residues Asn-6 and Asn-18 are each glycosylated (N-linked (GlcNAc...) asparagine). Residues 24 to 47 (VISVMFLLMYTAVVLGNGLIVVTI) traverse the membrane as a helical segment. Over 48–55 (LASKVLTS) the chain is Cytoplasmic. A helical membrane pass occupies residues 56-77 (PMYFFLSYLSFVEICYCSVMAP). Residues 78 to 98 (KLIFDSFIKRKVISLKGCLTQ) are Extracellular-facing. Cys-95 and Cys-187 are oxidised to a cystine. A helical transmembrane segment spans residues 99-118 (MFSLHFFGGTEAFLLMVMAY). The Cytoplasmic segment spans residues 119–137 (DRYVAICKPLHYMAIMNQR). The helical transmembrane segment at 138–156 (MCGLLVRIAWGGGLLHSVG) threads the bilayer. Topologically, residues 157–193 (QTFLIFQLPFCGPNIMDHYFCDVHPVLELACADTFFI) are extracellular. The chain crosses the membrane as a helical span at residues 194–217 (SLLIITNGGSISVVSFFVLMASYL). At 218-233 (IILHFLRSHNLEGQHK) the chain is on the cytoplasmic side. The helical transmembrane segment at 234-256 (ALSTCASHVTVVDLFFIPCSLVY) threads the bilayer. At 257 to 267 (IRPCVTLPADK) the chain is on the extracellular side. A helical membrane pass occupies residues 268–287 (IVAVFYTVVTPLLNPVIYSF). The Cytoplasmic portion of the chain corresponds to 288-305 (RNAEVKNAMRRFIGGKVI).

Belongs to the G-protein coupled receptor 1 family.

Its subcellular location is the cell membrane. Its function is as follows. Odorant receptor. This Homo sapiens (Human) protein is Olfactory receptor 4X1 (OR4X1).